The primary structure comprises 140 residues: ATP synthase epsilon chain (140 aa).

The protein belongs to the ATPase epsilon chain family. In terms of assembly, F-type ATPases have 2 components, CF(1) - the catalytic core - and CF(0) - the membrane proton channel. CF(1) has five subunits: alpha(3), beta(3), gamma(1), delta(1), epsilon(1). CF(0) has three main subunits: a, b and c.

Its subcellular location is the cell inner membrane. Its function is as follows. Produces ATP from ADP in the presence of a proton gradient across the membrane. In Xylella fastidiosa (strain Temecula1 / ATCC 700964), this protein is ATP synthase epsilon chain.